Here is a 402-residue protein sequence, read N- to C-terminus: MDTKFDDVLTGEQKLRNFNINFGPQHPAAHGVLRLVLELDGEVVERCDPHIGLLHRGTEKLMESRTYLQNLPYFDRLDYVAPMNQEHAWCLAIERLTGVAVPRRASLIRVLYSEIGRVLNHLLNVTTQAMDVGALTPPLWGFEEREKLMVFYERASGARLHAAYFRPGGVHQDLTPRLIEDIEEWAEHFPKVLDDLDELLTENRIFKQRNVDIGIISEKDILDWGFSGVMVRGSGFAWDLRRSQPYECYDEFDFQIPVGKNGDCYDRYLCRMEEMRQSTRIIQQCLAKLRVEKGDVLARGKLTPPPRGEMKTSMEALIHHFKLYTEGFHVPAGEVYAAVEAPKGEFGVYLVADGTNRPYRAKIRAPGFLHLQAIDYIAKGHLLADVSAIIGTLDVVFGEIDR.

It belongs to the complex I 49 kDa subunit family. NDH-1 is composed of 14 different subunits. Subunits NuoB, C, D, E, F, and G constitute the peripheral sector of the complex.

The protein resides in the cell inner membrane. The catalysed reaction is a quinone + NADH + 5 H(+)(in) = a quinol + NAD(+) + 4 H(+)(out). Its function is as follows. NDH-1 shuttles electrons from NADH, via FMN and iron-sulfur (Fe-S) centers, to quinones in the respiratory chain. The immediate electron acceptor for the enzyme in this species is believed to be ubiquinone. Couples the redox reaction to proton translocation (for every two electrons transferred, four hydrogen ions are translocated across the cytoplasmic membrane), and thus conserves the redox energy in a proton gradient. The sequence is that of NADH-quinone oxidoreductase subunit D from Cereibacter sphaeroides (strain ATCC 17029 / ATH 2.4.9) (Rhodobacter sphaeroides).